Here is a 932-residue protein sequence, read N- to C-terminus: Protein translocase subunit SecA, chloroplastic (932 aa).

Residue methionine 95–threonine 102 coordinates ATP. Positions histidine 632–leucine 641 are enriched in basic and acidic residues. Positions histidine 632–serine 653 are disordered.

The protein belongs to the SecA family.

The protein localises to the plastid. It is found in the chloroplast stroma. The protein resides in the chloroplast thylakoid membrane. The enzyme catalyses ATP + H2O + chloroplast-proteinSide 1 = ADP + phosphate + chloroplast-proteinSide 2.. Has a central role in coupling the hydrolysis of ATP to the transfer of proteins across the thylakoid membrane. This chain is Protein translocase subunit SecA, chloroplastic, found in Ostreococcus lucimarinus (strain CCE9901).